The sequence spans 786 residues: MGKVEFSGKRYVIDGEPVTIAGGTLQFFRVPADAWKDRLLKMREAGLNTVDTYVAWNWHEPEKGSFDFKGETHPQRNLVGFLELADELGFYVIIRPGPYICGEWRNGGIPDWLIDEHPEILAKGPNGPLPRDIYYPPITYLHPTYLEAVGEWYNAVFPVIRKYLYTNGGPIISVSIDDEPSYWETIFQPFLTDYNEIITKPGGLWEKWLEQNYTLEDLRRRYKGDFKDYSEIKVPTSFSEPLPKLIDWHHFKLWMINEYVRWIYERMAREFDVPISILDPYLLQVAWRHFFTYMREHNLKIHVWTEFWYSFYRSSDFKEDKLGHIYYKTGIYRYHVRKAGTPPLSIETQSSLAHTIDPTEAELLYSILPPLGIPNINYYLFVGGENPEGYESHNGITWDVYSPVGLDGSERPHFGVIKALSETMTSAEGLADAELRPKVAVGLYEPYEALNLWGYEGLEESTDLNEYLLGERGLFTLLAMSNTPFDAVDLEDVTLDELLSYDQLWVYSLDFMSREVQDKLVEFVARGGNLVILPMLPRYDENLEPYSSLKDFLGVEVEREKARRNPRLIQFLSVSAEGIDRMLVRNTVRGVRGGEPIAFLGEKPVGAFVRKGGGSAVVLGFRLQYYTSHHDLHRKFVWKLKELQGVREDFEVTNPDMIVLPMEGKGYAYLAVTNPRGHPIKGRISYRGLEVPVLLDGIELKRRGTLYLPFGVRKGDVEVAYATATLVMWEGDVLTFRNHLSGHSEIALKGVESVKVSGGKIVDGSDGEVLRIVIEHPGEYFEVELL.

Substrate is bound by residues Tyr53, 102 to 103, 178 to 179, Glu306, Glu347, and Tyr379; these read GE and DE. Glu179 serves as the catalytic Proton donor. The active-site Nucleophile is the Glu347.

The protein belongs to the glycosyl hydrolase 35 family. In terms of assembly, homodimer.

The protein resides in the cytoplasm. The catalysed reaction is beta-D-glucosaminyl-(1-&gt;4)-N-acetyl-D-glucosamine + H2O = D-glucosamine + N-acetyl-D-glucosamine. It participates in glycan degradation; chitin degradation. Functionally, exo-type enzyme that specifically cleaves the non-reducing terminal glycosidic bond of chitooligosaccharides. Catalyzes the hydrolysis of GlcN-GlcNAc to glucosamine (GlcN) and N-acetylglucosamine (GlcNAc). Involved in chitin degradation. Can also hydrolyze reduced chitobiose (GlcN2OH) and chitooligosaccharides of various chain lengths. The polypeptide is Exo-beta-D-glucosaminidase (Thermococcus kodakarensis (strain ATCC BAA-918 / JCM 12380 / KOD1) (Pyrococcus kodakaraensis (strain KOD1))).